Consider the following 218-residue polypeptide: Octanoyltransferase (218 aa).

A BPL/LPL catalytic domain is found at 32–211; the sequence is INTYDEIWFL…KLSQLLNVSI (180 aa). Substrate-binding positions include 75-82, 142-144, and 155-157; these read RGGQITYH, SLG, and GLS. Residue Cys-173 is the Acyl-thioester intermediate of the active site.

The protein belongs to the LipB family.

The protein localises to the cytoplasm. It carries out the reaction octanoyl-[ACP] + L-lysyl-[protein] = N(6)-octanoyl-L-lysyl-[protein] + holo-[ACP] + H(+). It functions in the pathway protein modification; protein lipoylation via endogenous pathway; protein N(6)-(lipoyl)lysine from octanoyl-[acyl-carrier-protein]: step 1/2. Its function is as follows. Catalyzes the transfer of endogenously produced octanoic acid from octanoyl-acyl-carrier-protein onto the lipoyl domains of lipoate-dependent enzymes. Lipoyl-ACP can also act as a substrate although octanoyl-ACP is likely to be the physiological substrate. This Buchnera aphidicola subsp. Schizaphis graminum (strain Sg) protein is Octanoyltransferase.